Consider the following 244-residue polypeptide: Small ribosomal subunit protein uS3 (244 aa).

Positions 39–110 (IRDYVRKNLS…QIRINVIEVE (72 aa)) constitute a KH type-2 domain. Positions 215–244 (EDAAPSNVGQPRRRNQQRRRQQFEDRSNEG) are disordered. The segment covering 225–234 (PRRRNQQRRR) has biased composition (basic residues). Positions 235–244 (QQFEDRSNEG) are enriched in basic and acidic residues.

It belongs to the universal ribosomal protein uS3 family. As to quaternary structure, part of the 30S ribosomal subunit. Forms a tight complex with proteins S10 and S14.

In terms of biological role, binds the lower part of the 30S subunit head. Binds mRNA in the 70S ribosome, positioning it for translation. The polypeptide is Small ribosomal subunit protein uS3 (Synechococcus sp. (strain ATCC 27144 / PCC 6301 / SAUG 1402/1) (Anacystis nidulans)).